The following is a 910-amino-acid chain: Disease resistance protein RPH8A (910 aa).

The stretch at 15–57 (DLLSRESERLQGIDEQLDGLKRQLRSLQSLLKDADAKKHGSDR) forms a coiled coil. The NB-ARC domain maps to 146-459 (RQRVQREIRQ…AEGIYDGSTI (314 aa)). Position 192 to 199 (192 to 199 (GMGGIGKT)) interacts with ATP.

The protein belongs to the disease resistance NB-LRR family. RPP8/HRT subfamily.

Disease resistance protein. Resistance proteins guard the plant against pathogens that contain an appropriate avirulence protein via an indirect interaction with this avirulence protein. That triggers a defense system including the hypersensitive response, which restricts the pathogen growth. In contrast to RPP8, it does not specifically recognize the Emco5 avirulence protein from Hyaloperonospora parasitica. The polypeptide is Disease resistance protein RPH8A (RPH8A) (Arabidopsis thaliana (Mouse-ear cress)).